Consider the following 193-residue polypeptide: Ion-translocating oxidoreductase complex subunit A (193 aa).

6 helical membrane passes run 5-25 (LLLFVGTVLVNNFVLVKFLGL), 39-59 (MGMGLATTFVMTLTSICAWLI), 63-83 (ILIPLNLIYLRTLAFILVIAV), 102-122 (LLGIFLPLITTNCAVLGVALL), 134-154 (ALYGFSAAVGFSLVMVLFAAI), and 171-191 (AIALITAGLMSLAFMGFSGLV).

The protein belongs to the NqrDE/RnfAE family. The complex is composed of six subunits: RsxA, RsxB, RsxC, RsxD, RsxE and RsxG.

Its subcellular location is the cell inner membrane. Part of a membrane-bound complex that couples electron transfer with translocation of ions across the membrane. Required to maintain the reduced state of SoxR. This chain is Ion-translocating oxidoreductase complex subunit A, found in Shigella flexneri serotype 5b (strain 8401).